The following is a 107-amino-acid chain: Phosphoribosyl-ATP pyrophosphatase 1 (107 aa).

The protein belongs to the PRA-PH family.

It localises to the cytoplasm. It carries out the reaction 1-(5-phospho-beta-D-ribosyl)-ATP + H2O = 1-(5-phospho-beta-D-ribosyl)-5'-AMP + diphosphate + H(+). Its pathway is amino-acid biosynthesis; L-histidine biosynthesis; L-histidine from 5-phospho-alpha-D-ribose 1-diphosphate: step 2/9. The polypeptide is Phosphoribosyl-ATP pyrophosphatase 1 (hisE1) (Rhodopseudomonas palustris (strain ATCC BAA-98 / CGA009)).